A 670-amino-acid polypeptide reads, in one-letter code: MKQIPEDIKKEIEKLVKELNYHNYRYYVLDSPVISDEEYDMMLRRLKELEEKWGYILPDSPTQRVGAAPSEKFEKAEHREPMLSLDNAFSIEELRDFDARVKRLLGSSEEVEYTVEPKYDGLAVELSYKDGLLYKASTRGDGYVGEDITQNIKTIKAIPLRIEGVDKIPEEIDIRGEVYLNIDEFERINKERIEKGEPVFANPRNAASGSVRQLDPSITASRRLYMSCYGIGYVKGIEFKSQIEFIEWLKKGRFPVPAYVKLAKGIEEVIEAIKEIEKLRQGYPFETDGAVVKVNSFELQRKLGTKTREPRWAIAYKYPAHQGITKLKDILASVGRTGVITPVAVLEPVKIGGVTVSRSTLHNWDEVERKDIRVGDYVIVERAGEVIPHIIGVVKDRRTGEEKEVKIPEHCPVCGSKTVREPGEVAVKCINFNCPAQVEERIKHFASRRAMNIEGLGDKTVELLHNKGIIKHFVDLYKLRQEDIKGLPGFAELSSKKLIEAIAKSKKTTLSRLLYALGISQVGEYASKLLAQHFRKLEDLYHIKAEKLVQIPQIGEKTAKTIEQFFNNEENLKAIEELKRMGLKVENPEFEEEKKPSPLKGLTFVITGTLPKPREEVKEMIEKAGGKVSSSVSKNTDYLLVGEDPGSKLAKAQALRVKTLSYEEFLKMLE.

NAD(+) is bound by residues 36–40, 84–85, and glutamate 116; these read DEEYD and SL. The N6-AMP-lysine intermediate role is filled by lysine 118. Residues arginine 139, glutamate 177, lysine 293, and lysine 317 each coordinate NAD(+). Zn(2+) contacts are provided by cysteine 411, cysteine 414, cysteine 429, and cysteine 434. Residues 594–670 form the BRCT domain; it reads KKPSPLKGLT…SYEEFLKMLE (77 aa).

Belongs to the NAD-dependent DNA ligase family. LigA subfamily. Requires Mg(2+) as cofactor. Mn(2+) is required as a cofactor.

The enzyme catalyses NAD(+) + (deoxyribonucleotide)n-3'-hydroxyl + 5'-phospho-(deoxyribonucleotide)m = (deoxyribonucleotide)n+m + AMP + beta-nicotinamide D-nucleotide.. In terms of biological role, DNA ligase that catalyzes the formation of phosphodiester linkages between 5'-phosphoryl and 3'-hydroxyl groups in double-stranded DNA using NAD as a coenzyme and as the energy source for the reaction. It is essential for DNA replication and repair of damaged DNA. This Thermodesulfovibrio yellowstonii (strain ATCC 51303 / DSM 11347 / YP87) protein is DNA ligase.